The primary structure comprises 434 residues: Quinolone resistance transporter (434 aa).

12 consecutive transmembrane segments (helical) span residues 15 to 35, 45 to 65, 85 to 105, 110 to 130, 142 to 162, 175 to 195, 241 to 261, 275 to 295, 306 to 326, 333 to 353, 367 to 387, and 396 to 416; these read LIPALVILYLVAYIDRAAVGF, GIGDAAYGLGAGLFFIGYFLF, ILLTWGLITMAMALIQGPKSF, FLLGVAEAGFFPGVLYLITQW, MFVLSQPIAMMIAGPLAGLLL, WLFVAVGLPAVLLALPTFLWL, VLLLALYYLPVTLSIYGLNLW, IQIGFLSSIPYIFGIIGLLII, YGHLSFLYALGACAMFLSGWL, LAALAVVAFCLFSSTAVFWTL, IALINSVGNLGGYVGPFGIGL, and AAGLYFLSIVMLFGLILTYIV.

This sequence belongs to the major facilitator superfamily.

It is found in the cell inner membrane. Efflux pump that mediates resistance to quinolone-type antibiotics. This chain is Quinolone resistance transporter, found in Acinetobacter baumannii.